The sequence spans 327 residues: Type II methyltransferase M.HhaI (327 aa).

Residues 12–325 enclose the SAM-dependent MTase C5-type domain; the sequence is LRFIDLFAGL…YNIGSSLNFK (314 aa). The active site involves Cys-81.

The protein belongs to the class I-like SAM-binding methyltransferase superfamily. C5-methyltransferase family. Monomer.

It catalyses the reaction a 2'-deoxycytidine in DNA + S-adenosyl-L-methionine = a 5-methyl-2'-deoxycytidine in DNA + S-adenosyl-L-homocysteine + H(+). In terms of biological role, a methylase, recognizes the double-stranded sequence 5'-GCGC-3', methylates C-2 on both strands, and protects the DNA from cleavage by the HhaI endonuclease. This is Type II methyltransferase M.HhaI (hhaIM) from Haemophilus parahaemolyticus.